The sequence spans 418 residues: Vasopressin V1a receptor (418 aa).

The tract at residues 1–43 (MRLSAGPDAGPSGNSSPWWPLATGAGNTSREAEALGEGNGPPR) is disordered. At 1–52 (MRLSAGPDAGPSGNSSPWWPLATGAGNTSREAEALGEGNGPPRDVRNEELAK) the chain is on the extracellular side. N27 carries N-linked (GlcNAc...) asparagine glycosylation. The helical transmembrane segment at 53–76 (LEIAVLAVTFAVAVLGNSSVLLAL) threads the bilayer. Residues 77–88 (HRTPRKTSRMHL) lie on the Cytoplasmic side of the membrane. The helical transmembrane segment at 89 to 110 (FIRHLSLADLAVAFFQVLPQMC) threads the bilayer. Over 111–125 (WDITYRFRGPDWLCR) the chain is Extracellular. C124 and C203 are joined by a disulfide. A helical membrane pass occupies residues 126 to 147 (VVKHLQVFGMFASAYMLVVMTA). At 148 to 168 (DRYIAVCHPLKTLQQPARRSR) the chain is on the cytoplasmic side. Residues 169-190 (LMIAAAWVLSFVLSTPQYFVFS) form a helical membrane-spanning segment. Over 191–218 (MIEVNNVTKARDCWATFIQPWGSRAYVT) the chain is Extracellular. N-linked (GlcNAc...) asparagine glycosylation occurs at N196. A helical transmembrane segment spans residues 219–239 (WMTGGIFVAPVVILGTCYGFI). Topologically, residues 240–293 (CYNIWCNVRGKTASRQSKGAEQAGVAFQKGFLLAPCVSSVKSISRAKIRTVKMT) are cytoplasmic. A helical transmembrane segment spans residues 294-313 (FVIVTAYIVCWAPFFIIQMW). Topologically, residues 314 to 331 (SVWDPMSVWTESENPTIT) are extracellular. Residues 332–351 (ITALLGSLNSCCNPWIYMFF) form a helical membrane-spanning segment. The Cytoplasmic segment spans residues 352 to 418 (SGHLLQDCVQ…KSIKFIPVST (67 aa)). Residues C365 and C366 are each lipidated (S-palmitoyl cysteine). Residues 377-410 (DTDSMSRRQTFYSNNRSPTNSTGMWKDSPKSSKS) form a disordered region. Residues 383 to 399 (RRQTFYSNNRSPTNSTG) show a composition bias toward polar residues. S404 is subject to Phosphoserine.

Belongs to the G-protein coupled receptor 1 family. Vasopressin/oxytocin receptor subfamily.

It is found in the cell membrane. Functionally, receptor for arginine vasopressin. The activity of this receptor is mediated by G proteins which activate a phosphatidyl-inositol-calcium second messenger system. Has been involved in social behaviors, including affiliation and attachment. The protein is Vasopressin V1a receptor (AVPR1A) of Homo sapiens (Human).